A 273-amino-acid polypeptide reads, in one-letter code: Bifunctional protein FolD (273 aa).

Residues 155-157 (GRS), S180, and T221 contribute to the NADP(+) site.

The protein belongs to the tetrahydrofolate dehydrogenase/cyclohydrolase family. In terms of assembly, homodimer.

It catalyses the reaction (6R)-5,10-methylene-5,6,7,8-tetrahydrofolate + NADP(+) = (6R)-5,10-methenyltetrahydrofolate + NADPH. The catalysed reaction is (6R)-5,10-methenyltetrahydrofolate + H2O = (6R)-10-formyltetrahydrofolate + H(+). The protein operates within one-carbon metabolism; tetrahydrofolate interconversion. Functionally, catalyzes the oxidation of 5,10-methylenetetrahydrofolate to 5,10-methenyltetrahydrofolate and then the hydrolysis of 5,10-methenyltetrahydrofolate to 10-formyltetrahydrofolate. This is Bifunctional protein FolD from Coprothermobacter proteolyticus (strain ATCC 35245 / DSM 5265 / OCM 4 / BT).